Here is a 314-residue protein sequence, read N- to C-terminus: L-lactate dehydrogenase 2 (314 aa).

Residues valine 16, aspartate 37, lysine 42, tyrosine 68, and 82-83 each bind NAD(+); that span reads GL. Residues glutamine 85, arginine 91, and 123-126 contribute to the substrate site; that span reads NPVD. NAD(+)-binding positions include 121–123 and serine 146; that span reads ATN. 151–154 is a binding site for substrate; it reads DSAR. Residues arginine 156 and histidine 171 each coordinate beta-D-fructose 1,6-bisphosphate. The active-site Proton acceptor is histidine 178. At tyrosine 223 the chain carries Phosphotyrosine. Residue threonine 232 coordinates substrate.

Belongs to the LDH/MDH superfamily. LDH family. In terms of assembly, homotetramer.

It is found in the cytoplasm. The enzyme catalyses (S)-lactate + NAD(+) = pyruvate + NADH + H(+). It participates in fermentation; pyruvate fermentation to lactate; (S)-lactate from pyruvate: step 1/1. Allosterically activated by fructose 1,6-bisphosphate (FBP). Functionally, catalyzes the conversion of lactate to pyruvate. The sequence is that of L-lactate dehydrogenase 2 from Bacillus cereus (strain ATCC 10987 / NRS 248).